Consider the following 258-residue polypeptide: Type III pantothenate kinase (258 aa).

12–19 (DIGNTSIA) contacts ATP. Residues tyrosine 94 and 109–112 (GSDV) each bind substrate. The active-site Proton acceptor is the aspartate 111. Aspartate 132 lines the K(+) pocket. Threonine 135 serves as a coordination point for ATP. Threonine 187 provides a ligand contact to substrate.

This sequence belongs to the type III pantothenate kinase family. As to quaternary structure, homodimer. It depends on NH4(+) as a cofactor. Requires K(+) as cofactor.

It is found in the cytoplasm. It carries out the reaction (R)-pantothenate + ATP = (R)-4'-phosphopantothenate + ADP + H(+). It functions in the pathway cofactor biosynthesis; coenzyme A biosynthesis; CoA from (R)-pantothenate: step 1/5. Catalyzes the phosphorylation of pantothenate (Pan), the first step in CoA biosynthesis. This chain is Type III pantothenate kinase, found in Borreliella afzelii (strain PKo) (Borrelia afzelii).